The following is a 188-amino-acid chain: Acireductone dioxygenase (188 aa).

Fe(2+) contacts are provided by His97, His99, Glu103, and His141. Ni(2+) is bound by residues His97, His99, Glu103, and His141.

Belongs to the acireductone dioxygenase (ARD) family. As to quaternary structure, monomer. It depends on Fe(2+) as a cofactor. Ni(2+) serves as cofactor.

It catalyses the reaction 1,2-dihydroxy-5-(methylsulfanyl)pent-1-en-3-one + O2 = 3-(methylsulfanyl)propanoate + CO + formate + 2 H(+). It carries out the reaction 1,2-dihydroxy-5-(methylsulfanyl)pent-1-en-3-one + O2 = 4-methylsulfanyl-2-oxobutanoate + formate + 2 H(+). It functions in the pathway amino-acid biosynthesis; L-methionine biosynthesis via salvage pathway; L-methionine from S-methyl-5-thio-alpha-D-ribose 1-phosphate: step 5/6. In terms of biological role, catalyzes 2 different reactions between oxygen and the acireductone 1,2-dihydroxy-3-keto-5-methylthiopentene (DHK-MTPene) depending upon the metal bound in the active site. Fe-containing acireductone dioxygenase (Fe-ARD) produces formate and 2-keto-4-methylthiobutyrate (KMTB), the alpha-ketoacid precursor of methionine in the methionine recycle pathway. Ni-containing acireductone dioxygenase (Ni-ARD) produces methylthiopropionate, carbon monoxide and formate, and does not lie on the methionine recycle pathway. The sequence is that of Acireductone dioxygenase from Xylella fastidiosa (strain M12).